We begin with the raw amino-acid sequence, 284 residues long: Tropomyosin (284 aa).

The residue at position 1 (Met1) is an N-acetylmethionine. 2 disordered regions span residues 1–49 (MDAI…NQKK) and 103–126 (EERL…SERM). Residues 1 to 284 (MDAIKKKMQA…DQAFSELSGF (284 aa)) are a coiled coil. The span at 12–45 (KLEKDNAMDKADTLEQQNKEANLRAEKTEEEIRA) shows a compositional bias: basic and acidic residues.

This sequence belongs to the tropomyosin family. In terms of assembly, homodimer. Expressed in leg muscle and chest protection muscle (at protein level).

Functionally, tropomyosin, in association with the troponin complex, plays a central role in the calcium dependent regulation of muscle contraction. The sequence is that of Tropomyosin from Chionoecetes opilio (Atlantic snow crab).